Reading from the N-terminus, the 248-residue chain is 1-(5-phosphoribosyl)-5-[(5-phosphoribosylamino)methylideneamino] imidazole-4-carboxamide isomerase (248 aa).

The active-site Proton acceptor is aspartate 8. Aspartate 129 acts as the Proton donor in catalysis.

It belongs to the HisA/HisF family.

The protein resides in the cytoplasm. The catalysed reaction is 1-(5-phospho-beta-D-ribosyl)-5-[(5-phospho-beta-D-ribosylamino)methylideneamino]imidazole-4-carboxamide = 5-[(5-phospho-1-deoxy-D-ribulos-1-ylimino)methylamino]-1-(5-phospho-beta-D-ribosyl)imidazole-4-carboxamide. Its pathway is amino-acid biosynthesis; L-histidine biosynthesis; L-histidine from 5-phospho-alpha-D-ribose 1-diphosphate: step 4/9. This Rhizobium etli (strain CIAT 652) protein is 1-(5-phosphoribosyl)-5-[(5-phosphoribosylamino)methylideneamino] imidazole-4-carboxamide isomerase.